Reading from the N-terminus, the 202-residue chain is Peptide methionine sulfoxide reductase B2, chloroplastic (202 aa).

The transit peptide at 1–63 (MAFNIITPGR…RRGFHGGRIV (63 aa)) directs the protein to the chloroplast. The MsrB domain maps to 77–198 (EEEWRAILSP…NSISLKFTPE (122 aa)). Zn(2+) contacts are provided by C116, C119, C162, and C165. Cysteines 134 and 187 form a disulfide. Catalysis depends on C187, which acts as the Nucleophile.

This sequence belongs to the MsrB Met sulfoxide reductase family. It depends on Zn(2+) as a cofactor. In terms of tissue distribution, expressed in stems, young leaves, floral buds and flowers. Expressed at low levels in roots, mature leaves and siliques (at protein level).

Its subcellular location is the plastid. The protein resides in the chloroplast. It carries out the reaction L-methionyl-[protein] + [thioredoxin]-disulfide + H2O = L-methionyl-(R)-S-oxide-[protein] + [thioredoxin]-dithiol. In terms of biological role, catalyzes the reduction of methionine sulfoxide (MetSO) to methionine in proteins. Specifically reduces the MetSO R-enantiomer. Plays a protective role against oxidative stress by restoring activity to proteins that have been inactivated by methionine oxidation. May play an essential function in association with MSRB1 in maintaining vegetative growth during environmental constraints, through the preservation of photosynthetic antennae. MSRB1 and MSRB2 account for most of the leaf peptide MSR capacity. This chain is Peptide methionine sulfoxide reductase B2, chloroplastic, found in Arabidopsis thaliana (Mouse-ear cress).